The following is a 115-amino-acid chain: U3-lycotoxin-Ls1a (115 aa).

Residues 1–20 form the signal peptide; the sequence is MKFVLLFGVLLVTLFSYSSA. Positions 21–44 are excised as a propeptide; that stretch reads EMLDDFDQAVEDELLSLIEKEEAR. Intrachain disulfides connect Cys-48–Cys-63, Cys-55–Cys-72, Cys-62–Cys-87, and Cys-74–Cys-85.

The protein belongs to the neurotoxin 19 (CSTX) family. 01 subfamily. As to expression, expressed by the venom gland.

The protein resides in the secreted. The sequence is that of U3-lycotoxin-Ls1a from Lycosa singoriensis (Wolf spider).